Consider the following 472-residue polypeptide: Eukaryotic translation initiation factor 2 subunit 3 (472 aa).

At Ala-2 the chain carries N-acetylalanine. Ser-16 carries the phosphoserine modification. The region spanning 39–248 (QATINIGTIG…IVKKIPVPPR (210 aa)) is the tr-type G domain. The tract at residues 48-55 (GHVAHGKS) is G1. Residue 51–56 (AHGKST) participates in GTP binding. Positions 76 to 80 (NITIK) are G2. Positions 134–137 (DCPG) are G3. GTP is bound by residues 190-193 (NKID) and 225-227 (SAQ). The segment at 190 to 193 (NKID) is G4. Residues 225–227 (SAQ) form a G5 region. The segment at 457-469 (GQIRRGVTIKPTV) is interacts with CDC123.

This sequence belongs to the TRAFAC class translation factor GTPase superfamily. Classic translation factor GTPase family. EIF2G subfamily. In terms of assembly, eukaryotic translation initiation factor 2 eIF2 is a heterotrimeric complex composed of an alpha (EIF2S1), a beta (EIF2S2) and a gamma (EIF2S3) chain. eIF2 is member of the 43S pre-initiation complex (43S PIC). Interacts (via C-terminus) with CDC123; the interaction is direct.

The protein resides in the cytoplasm. It localises to the cytosol. The enzyme catalyses GTP + H2O = GDP + phosphate + H(+). In terms of biological role, member of the eIF2 complex that functions in the early steps of protein synthesis by forming a ternary complex with GTP and initiator tRNA. This complex binds to a 40S ribosomal subunit, followed by mRNA binding to form the 43S pre-initiation complex (43S PIC). Junction of the 60S ribosomal subunit to form the 80S initiation complex is preceded by hydrolysis of the GTP bound to eIF2 and release of an eIF2-GDP binary complex. In order for eIF2 to recycle and catalyze another round of initiation, the GDP bound to eIF2 must exchange with GTP by way of a reaction catalyzed by eIF-2B. This is Eukaryotic translation initiation factor 2 subunit 3 (EIF2S3) from Bos taurus (Bovine).